A 212-amino-acid chain; its full sequence is 3-isopropylmalate dehydratase small subunit 1 (212 aa).

The protein belongs to the LeuD family. LeuD type 1 subfamily. In terms of assembly, heterodimer of LeuC and LeuD.

The catalysed reaction is (2R,3S)-3-isopropylmalate = (2S)-2-isopropylmalate. It participates in amino-acid biosynthesis; L-leucine biosynthesis; L-leucine from 3-methyl-2-oxobutanoate: step 2/4. Catalyzes the isomerization between 2-isopropylmalate and 3-isopropylmalate, via the formation of 2-isopropylmaleate. In Chromobacterium violaceum (strain ATCC 12472 / DSM 30191 / JCM 1249 / CCUG 213 / NBRC 12614 / NCIMB 9131 / NCTC 9757 / MK), this protein is 3-isopropylmalate dehydratase small subunit 1.